Reading from the N-terminus, the 1905-residue chain is Low-density lipoprotein receptor-related protein 4 (1905 aa).

The first 20 residues, 1–20 (MRRQWGALLLGALLCAHGLA), serve as a signal peptide directing secretion. The Extracellular portion of the chain corresponds to 21–1725 (SSPECACGRS…AAPGEGLHIS (1705 aa)). 8 consecutive LDL-receptor class A domains span residues 26 to 67 (ACGR…DGCI), 70 to 106 (TCSP…QDCP), 109 to 144 (ECEE…EQCD), 147 to 183 (KCSD…ENCP), 190 to 226 (PCNL…SDCS), 230 to 266 (PCRS…RNCT), 269 to 305 (MCTA…ENCE), and 311 to 350 (QCAL…QNCR). 30 cysteine pairs are disulfide-bonded: Cys-27-Cys-44, Cys-34-Cys-57, Cys-51-Cys-66, Cys-71-Cys-83, Cys-78-Cys-96, Cys-90-Cys-105, Cys-110-Cys-122, Cys-117-Cys-135, Cys-129-Cys-143, Cys-148-Cys-160, Cys-155-Cys-173, Cys-167-Cys-182, Cys-191-Cys-203, Cys-198-Cys-216, Cys-210-Cys-225, Cys-231-Cys-243, Cys-238-Cys-256, Cys-250-Cys-265, Cys-270-Cys-282, Cys-277-Cys-295, Cys-289-Cys-304, Cys-312-Cys-324, Cys-319-Cys-337, Cys-331-Cys-349, Cys-358-Cys-369, Cys-365-Cys-378, Cys-380-Cys-393, Cys-399-Cys-409, Cys-405-Cys-418, and Cys-420-Cys-433. The N-linked (GlcNAc...) asparagine glycan is linked to Asn-264. Residues 354–394 (GEENCNVNNGGCAQKCQMVRGAVQCTCHTGYRLTEDGHTCQ) enclose the EGF-like 1; calcium-binding domain. The EGF-like 2; calcium-binding domain occupies 395–434 (DVNECAEEGYCSQGCTNSEGAFQCWCETGYELRPDRRSCK). LDL-receptor class B repeat units follow at residues 480–522 (ELVF…DWVH), 523–565 (DKLY…HPME), 566–609 (GTIY…DYAG), 610–652 (RRMY…FEDS), and 653–693 (LYWT…LHPQ). Asn-498 carries an N-linked (GlcNAc...) asparagine glycan. The 40-residue stretch at 698-737 (GKNRCGDNNGGCTHLCLPSGQNYTCACPTGFRKISSHACA) folds into the EGF-like 3 domain. Disulfide bonds link Cys-702-Cys-713, Cys-709-Cys-722, and Cys-724-Cys-736. Asn-719 carries N-linked (GlcNAc...) asparagine glycosylation. LDL-receptor class B repeat units follow at residues 785–827 (DHVY…DWVT), 828–870 (NKLY…EPMG), 871–914 (GYMY…DYGS), 915–956 (QRLY…LYGE), and 957–998 (RIYW…FHRR). Residue Asn-901 is glycosylated (N-linked (GlcNAc...) asparagine). N-linked (GlcNAc...) asparagine glycosylation occurs at Asn-1077. LDL-receptor class B repeat units follow at residues 1093–1135 (GKVY…DAIG), 1136–1178 (RKVY…YHEM), 1179–1222 (GFMY…DKAS), 1223–1263 (SQLL…LLDS), 1264–1306 (YIYW…DRAQ), 1397–1439 (GKVY…DWVA), 1440–1482 (RNLY…FPRK), 1483–1526 (GYLF…DYDT), 1527–1568 (RRIY…QDRW), and 1569–1610 (IYWT…SPQR). Residues Asn-1415 and Asn-1467 are each glycosylated (N-linked (GlcNAc...) asparagine). Positions 1659-1686 (PRATGMSEKSPVLPNTPPTTLYSSTTRT) are disordered. Positions 1676–1686 (PTTLYSSTTRT) are enriched in low complexity. Residues 1726-1746 (YAIGGLLSILLILVVIAALML) form a helical membrane-spanning segment. Topologically, residues 1747–1905 (YRHKKSKFTD…ERKLSSESQV (159 aa)) are cytoplasmic. The Endocytosis signal signature appears at 1766–1769 (NPSY). The segment at 1852–1905 (ASSGSLDDTETEQLLQEEQSECSSVHTAATPERRGSLPDTGWKHERKLSSESQV) is disordered. Positions 1882–1905 (PERRGSLPDTGWKHERKLSSESQV) are enriched in basic and acidic residues.

It belongs to the LDLR family. In terms of assembly, homooligomer. Interacts with MUSK; the heterodimer forms an AGRIN receptor complex that binds AGRIN resulting in activation of MUSK. Interacts (via the extracellular domain) with SOST; the interaction facilitates the inhibition of Wnt signaling. Interacts with MESD; the interaction promotes glycosylation of LRP4 and its cell-surface expression. As to expression, expressed in bone; present in osteoblasts and osteocytes. No expression is observed in osteoclast. Expressed in several regions of the brain.

It is found in the cell membrane. Mediates SOST-dependent inhibition of bone formation. Functions as a specific facilitator of SOST-mediated inhibition of Wnt signaling. Plays a key role in the formation and the maintenance of the neuromuscular junction (NMJ), the synapse between motor neuron and skeletal muscle. Directly binds AGRIN and recruits it to the MUSK signaling complex. Mediates the AGRIN-induced phosphorylation of MUSK, the kinase of the complex. The activation of MUSK in myotubes induces the formation of NMJ by regulating different processes including the transcription of specific genes and the clustering of AChR in the postsynaptic membrane. Alternatively, may be involved in the negative regulation of the canonical Wnt signaling pathway, being able to antagonize the LRP6-mediated activation of this pathway. More generally, has been proposed to function as a cell surface endocytic receptor binding and internalizing extracellular ligands for degradation by lysosomes. May play an essential role in the process of digit differentiation. In Homo sapiens (Human), this protein is Low-density lipoprotein receptor-related protein 4 (LRP4).